The primary structure comprises 122 residues: Small ribosomal subunit protein uS13 (122 aa).

Residues 97-122 form a disordered region; sequence PVRGQRTHTNARTRKGPAKAIAGKKK.

This sequence belongs to the universal ribosomal protein uS13 family. In terms of assembly, part of the 30S ribosomal subunit. Forms a loose heterodimer with protein S19. Forms two bridges to the 50S subunit in the 70S ribosome.

Located at the top of the head of the 30S subunit, it contacts several helices of the 16S rRNA. In the 70S ribosome it contacts the 23S rRNA (bridge B1a) and protein L5 of the 50S subunit (bridge B1b), connecting the 2 subunits; these bridges are implicated in subunit movement. Contacts the tRNAs in the A and P-sites. The chain is Small ribosomal subunit protein uS13 from Brucella abortus (strain S19).